The sequence spans 416 residues: Exodeoxyribonuclease 7 large subunit (416 aa).

Belongs to the XseA family. Heterooligomer composed of large and small subunits.

Its subcellular location is the cytoplasm. The catalysed reaction is Exonucleolytic cleavage in either 5'- to 3'- or 3'- to 5'-direction to yield nucleoside 5'-phosphates.. Bidirectionally degrades single-stranded DNA into large acid-insoluble oligonucleotides, which are then degraded further into small acid-soluble oligonucleotides. This chain is Exodeoxyribonuclease 7 large subunit, found in Nitratiruptor sp. (strain SB155-2).